A 299-amino-acid polypeptide reads, in one-letter code: Tryptophan prenyltransferase ComQ (299 aa).

Residues aspartate 67 and aspartate 71 each contribute to the Mg(2+) site.

It belongs to the FPP/GGPP synthase family. The cofactor is Mg(2+).

The protein localises to the cell membrane. The catalysed reaction is L-tryptophyl-[protein] + (2E,6E)-farnesyl diphosphate = (2S,3R)-3-farnesyl-2,3-dihydro-2,N(alpha)-cyclo-L-tryptophyl-[protein] + diphosphate. In terms of biological role, part of a major quorum-sensing system that regulates the development of genetic competence. Involved in the maturation of the competence pheromone ComX. Acts by catalyzing the transfer of a farnesyl group on the ComX pheromone. Shows weak geranylation activity with geranyl diphosphate (GPP). The polypeptide is Tryptophan prenyltransferase ComQ (Bacillus subtilis (strain 168)).